A 229-amino-acid chain; its full sequence is MEVLQQLGTYYSQNGGYVLQEFYRHFLMSVYGVLFAAIVGIPLGILIARYRRLSGWVFAVTNVIQTIPALAMLAVLMLVMGLGANTVILSLFLYSLLPIIRNTYTGIISIEHAYLESGKAMGMTKFQVLRMVELPLALSVIMAGLRTALVIAIGITAIGTFVGAGGLGDIIVRGSNATNGTAIILAGAIPTALMAVIADLVMGWLERALSPIKKKKGNFIIADRKTTSI.

The ABC transmembrane type-1 domain occupies 22 to 202 (FYRHFLMSVY…LMAVIADLVM (181 aa)). 5 helical membrane-spanning segments follow: residues 27-47 (LMSV…GILI), 55-74 (GWVF…AMLA), 78-100 (LVMG…LPII), 148-168 (ALVI…GGLG), and 182-202 (AIIL…DLVM).

Belongs to the binding-protein-dependent transport system permease family. CysTW subfamily. The complex is composed of two ATP-binding proteins (OpuCA), two transmembrane proteins (OpuCB and OpuCD) and a solute-binding protein (OpuCC).

Its subcellular location is the cell membrane. Functionally, involved in a high affinity multicomponent binding-protein-dependent transport system for glycine betaine, carnitine and choline; probably responsible for the translocation of the substrate across the membrane. This chain is Glycine betaine/carnitine/choline transport system permease protein OpuCD (opuCD), found in Bacillus subtilis (strain 168).